Reading from the N-terminus, the 482-residue chain is Glutamate--tRNA ligase 2 (482 aa).

A 'HIGH' region motif is present at residues 16 to 26; that stretch reads PSPTGYLHLGN. Cys113, Cys115, Cys140, and His142 together coordinate Zn(2+). A 'KMSKS' region motif is present at residues 257–261; the sequence is PLSKR. Lys260 contacts ATP.

This sequence belongs to the class-I aminoacyl-tRNA synthetase family. Glutamate--tRNA ligase type 1 subfamily. As to quaternary structure, monomer. It depends on Zn(2+) as a cofactor.

Its subcellular location is the cytoplasm. The catalysed reaction is tRNA(Glu) + L-glutamate + ATP = L-glutamyl-tRNA(Glu) + AMP + diphosphate. Catalyzes the attachment of glutamate to tRNA(Glu) in a two-step reaction: glutamate is first activated by ATP to form Glu-AMP and then transferred to the acceptor end of tRNA(Glu). This Acidithiobacillus ferrooxidans (strain ATCC 53993 / BNL-5-31) (Leptospirillum ferrooxidans (ATCC 53993)) protein is Glutamate--tRNA ligase 2.